The primary structure comprises 456 residues: Hydroxyproline dehydrogenase (456 aa).

An N6-acetyllysine mark is found at Lys310 and Lys320.

This sequence belongs to the proline oxidase family. The cofactor is FAD.

The catalysed reaction is trans-4-hydroxy-L-proline + a quinone = (3R,5S)-1-pyrroline-3-hydroxy-5-carboxylate + a quinol + H(+). The enzyme catalyses L-proline + a quinone = (S)-1-pyrroline-5-carboxylate + a quinol + H(+). Functionally, dehydrogenase that converts trans-4-L-hydroxyproline to delta-1-pyrroline-3-hydroxy-5-carboxylate (Hyp) using ubiquinone-10 as the terminal electron acceptor. Can also use proline as a substrate but with a very much lower efficiency. Does not react with other diastereomers of Hyp: trans-4-D-hydroxyproline and cis-4-L-hydroxyproline. Ubiquininone analogs such as menadione, duroquinone and ubiquinone-1 react more efficiently than oxygen as the terminal electron acceptor during catalysis. The sequence is that of Hydroxyproline dehydrogenase from Mus musculus (Mouse).